Here is a 1802-residue protein sequence, read N- to C-terminus: Transposon Ty4-H Gag-Pol polyprotein (1802 aa).

Residues 39–115 (RKVSIKDEQV…IQLLETNENN (77 aa)) adopt a coiled-coil conformation. The segment at 381-501 (NNNLSPVQNE…KTKMVLSRKY (121 aa)) is ty4 protease. The active-site For protease activity; shared with dimeric partner is D414. The tract at residues 539–599 (AIKPTSSPGF…EPNEFWCQTC (61 aa)) is integrase-type zinc finger-like. One can recognise an Integrase catalytic domain in the interval 619–786 (TDHEPGSSWC…LPLKAISRQP (168 aa)). Mg(2+)-binding residues include D630 and D695. The disordered stretch occupies residues 1223-1248 (KRKRKRHDKNNSLTSYELERDKKRSK). A Reverse transcriptase Ty1/copia-type domain is found at 1375–1510 (RNMFMKTLDI…DILGMDLVYN (136 aa)). 6 residues coordinate Mg(2+): D1383, D1462, D1463, D1644, E1686, and D1720. The RNase H Ty1/copia-type domain occupies 1644–1790 (DASVGSEYDA…KRFIQVLKNK (147 aa)).

The protease is a homodimer, whose active site consists of two apposed aspartic acid residues. Post-translationally, proteolytically processed into capsid protein (CA), Ty4 protease (PR), integrase (IN) and reverse transcriptase/ribonuclease H (RT) proteins. Initially, virus-like particles (VLPs) are composed of the structural unprocessed proteins Gag and Gag-Pol, and also contain the host initiator methionine tRNA (tRNA(i)-Met) which serves as a primer for minus-strand DNA synthesis, and a dimer of genomic Ty RNA. Processing of the polyproteins occurs within the particle and proceeds by an ordered pathway, called maturation. First, the protease (PR) is released by autocatalytic cleavage of the Gag-Pol polyprotein, and this cleavage is a prerequisite for subsequent processing at the remaining sites to release the mature structural and catalytic proteins. Maturation takes place prior to the RT reaction and is required to produce transposition-competent VLPs.

The protein localises to the cytoplasm. Its subcellular location is the nucleus. It carries out the reaction DNA(n) + a 2'-deoxyribonucleoside 5'-triphosphate = DNA(n+1) + diphosphate. The catalysed reaction is Endonucleolytic cleavage to 5'-phosphomonoester.. Capsid protein (CA) is the structural component of the virus-like particle (VLP), forming the shell that encapsulates the retrotransposons dimeric RNA genome. Functionally, the aspartyl protease (PR) mediates the proteolytic cleavages of the Gag and Gag-Pol polyproteins after assembly of the VLP. Its function is as follows. Reverse transcriptase/ribonuclease H (RT) is a multifunctional enzyme that catalyzes the conversion of the retro-elements RNA genome into dsDNA within the VLP. The enzyme displays a DNA polymerase activity that can copy either DNA or RNA templates, and a ribonuclease H (RNase H) activity that cleaves the RNA strand of RNA-DNA heteroduplexes during plus-strand synthesis and hydrolyzes RNA primers. The conversion leads to a linear dsDNA copy of the retrotransposon that includes long terminal repeats (LTRs) at both ends. In terms of biological role, integrase (IN) targets the VLP to the nucleus, where a subparticle preintegration complex (PIC) containing at least integrase and the newly synthesized dsDNA copy of the retrotransposon must transit the nuclear membrane. Once in the nucleus, integrase performs the integration of the dsDNA into the host genome. This is Transposon Ty4-H Gag-Pol polyprotein (TY4B-H) from Saccharomyces cerevisiae (strain ATCC 204508 / S288c) (Baker's yeast).